Here is a 216-residue protein sequence, read N- to C-terminus: uncharacterized protein (216 aa).

A disordered region spans residues 55–216; it reads NEDKAEAMSN…NEKEKDVNPK (162 aa). Basic and acidic residues-rich tracts occupy residues 134–152, 177–187, and 207–216; these read LTEKPLTDTEPELHPDNHV, KINDKSDDTLH, and NEKEKDVNPK.

This is an uncharacterized protein from Caenorhabditis elegans.